The chain runs to 218 residues: NAD(P)H-quinone oxidoreductase subunit I (218 aa).

4Fe-4S ferredoxin-type domains lie at 55–84 (GRIH…VDWV) and 95–124 (RNYS…MTEE). Cysteine 64, cysteine 67, cysteine 70, cysteine 74, cysteine 104, cysteine 107, cysteine 110, and cysteine 114 together coordinate [4Fe-4S] cluster. The segment at 179–218 (LRAGKLPSQIIKELQADKSEEEGKNNSSDMVPNKLNSTNK) is disordered. Positions 192-202 (LQADKSEEEGK) are enriched in basic and acidic residues. Polar residues predominate over residues 203-218 (NNSSDMVPNKLNSTNK).

Belongs to the complex I 23 kDa subunit family. As to quaternary structure, NDH-1 is composed of at least 11 different subunits. The cofactor is [4Fe-4S] cluster.

The protein resides in the cellular thylakoid membrane. The enzyme catalyses a plastoquinone + NADH + (n+1) H(+)(in) = a plastoquinol + NAD(+) + n H(+)(out). The catalysed reaction is a plastoquinone + NADPH + (n+1) H(+)(in) = a plastoquinol + NADP(+) + n H(+)(out). Functionally, NDH-1 shuttles electrons from an unknown electron donor, via FMN and iron-sulfur (Fe-S) centers, to quinones in the respiratory and/or the photosynthetic chain. The immediate electron acceptor for the enzyme in this species is believed to be plastoquinone. Couples the redox reaction to proton translocation, and thus conserves the redox energy in a proton gradient. The sequence is that of NAD(P)H-quinone oxidoreductase subunit I from Prochlorococcus marinus (strain NATL2A).